A 263-amino-acid polypeptide reads, in one-letter code: MEGGFTGGDEYQKHFLPRDYLNTYYSFQSGPSPEAEMLKFNLECLHKTFGPGGLQGDTLIDIGSGPTIYQVLAACESFKDITLSDFTDRNREELAKWLKKEPGAYDWTPALKFACELEGNSGRWQEKAEKLRATVKRVLKCDANLSNPLTPVVLPPADCVLTLLAMECACCSLDAYRAALRNLASLLKPGGHLVTTVTLQLSSYMVGEREFSCVALEKEEVEQAVLDAGFDIEQLLYSPQSYSASTAPNRGVCFLVARKKPGS.

Position 13 is an N6-succinyllysine (K13). Residues Y20, Y25, 63 to 64 (GS), Y69, D85, and N90 contribute to the S-adenosyl-L-methionine site. At K96 the chain carries N6-succinyllysine. S-adenosyl-L-methionine is bound by residues 142–143 (DA) and L163.

Belongs to the class I-like SAM-binding methyltransferase superfamily. NNMT/PNMT/TEMT family. Monomer. Highly expressed in lung, also detected in liver and at very low levels in brain.

The protein localises to the cytoplasm. It catalyses the reaction a tertiary amine + S-adenosyl-L-methionine = a methylated tertiary amine + S-adenosyl-L-homocysteine + H(+). The enzyme catalyses a secondary amine + S-adenosyl-L-methionine = a methylated secondary amine + S-adenosyl-L-homocysteine + H(+). It carries out the reaction a primary amine + S-adenosyl-L-methionine = a methylated primary amine + S-adenosyl-L-homocysteine + H(+). The catalysed reaction is dimethyl sulfide + S-adenosyl-L-methionine = trimethylsulfonium + S-adenosyl-L-homocysteine. In terms of biological role, catalyzes the N-methylation of tryptamine and structurally related compounds. Functions as a thioether S-methyltransferase and is active with a variety of thioethers and the corresponding selenium and tellurium compounds, including 3-methylthiopropionaldehyde, dimethyl selenide, dimethyl telluride, 2-methylthioethylamine, 2-methylthioethanol, methyl-n-propyl sulfide and diethyl sulfide. Plays an important role in the detoxification of selenium compounds. In Oryctolagus cuniculus (Rabbit), this protein is Indolethylamine N-methyltransferase (INMT).